We begin with the raw amino-acid sequence, 549 residues long: CTP synthase (549 aa).

The tract at residues 1-272 (MPPKSSTTKH…DAYVVRRMDL (272 aa)) is amidoligase domain. S19 contacts CTP. Residue S19 coordinates UTP. ATP contacts are provided by residues 20 to 25 (SLGKGL) and D77. Mg(2+) is bound by residues D77 and E146. Residues 153 to 155 (DIE), 193 to 198 (KTKPTQ), and K229 each bind CTP. UTP contacts are provided by residues 193–198 (KTKPTQ) and K229. Positions 301–548 (VGKYIDLPDA…VKAAVERKTS (248 aa)) constitute a Glutamine amidotransferase type-1 domain. An L-glutamine-binding site is contributed by G360. Catalysis depends on C387, which acts as the Nucleophile; for glutamine hydrolysis. Residues 388-391 (LGLQ), E411, and R473 contribute to the L-glutamine site. Residues H521 and E523 contribute to the active site.

Belongs to the CTP synthase family. In terms of assembly, homotetramer.

It carries out the reaction UTP + L-glutamine + ATP + H2O = CTP + L-glutamate + ADP + phosphate + 2 H(+). The enzyme catalyses L-glutamine + H2O = L-glutamate + NH4(+). The catalysed reaction is UTP + NH4(+) + ATP = CTP + ADP + phosphate + 2 H(+). Its pathway is pyrimidine metabolism; CTP biosynthesis via de novo pathway; CTP from UDP: step 2/2. Its activity is regulated as follows. Allosterically activated by GTP, when glutamine is the substrate; GTP has no effect on the reaction when ammonia is the substrate. The allosteric effector GTP functions by stabilizing the protein conformation that binds the tetrahedral intermediate(s) formed during glutamine hydrolysis. Inhibited by the product CTP, via allosteric rather than competitive inhibition. Its function is as follows. Catalyzes the ATP-dependent amination of UTP to CTP with either L-glutamine or ammonia as the source of nitrogen. Regulates intracellular CTP levels through interactions with the four ribonucleotide triphosphates. In Streptomyces coelicolor (strain ATCC BAA-471 / A3(2) / M145), this protein is CTP synthase.